Reading from the N-terminus, the 137-residue chain is Basic phospholipase A2 beta-bungarotoxin A-AL4 chain (137 aa).

The first 10 residues, 1 to 10 (LAVCVSLLGA), serve as a signal peptide directing secretion. Residues 11-18 (ANIPPQHL) constitute a propeptide that is removed on maturation. 6 cysteine pairs are disulfide-bonded: Cys-45–Cys-137, Cys-47–Cys-63, Cys-62–Cys-118, Cys-69–Cys-111, Cys-79–Cys-104, and Cys-97–Cys-109. Ca(2+) is bound by residues Tyr-46, Gly-48, and Gly-50. The active site involves His-66. Asp-67 contacts Ca(2+). Asp-112 is a catalytic residue.

The protein belongs to the phospholipase A2 family. Group I subfamily. D49 sub-subfamily. Heterodimer; disulfide-linked. The A chains have phospholipase A2 activity and the B chains show homology with the basic protease inhibitors. Ca(2+) is required as a cofactor. In terms of tissue distribution, expressed by the venom gland.

The protein resides in the secreted. The enzyme catalyses a 1,2-diacyl-sn-glycero-3-phosphocholine + H2O = a 1-acyl-sn-glycero-3-phosphocholine + a fatty acid + H(+). In terms of biological role, snake venom phospholipase A2 (PLA2) that inhibits neuromuscular transmission by blocking acetylcholine release from the nerve termini. PLA2 catalyzes the calcium-dependent hydrolysis of the 2-acyl groups in 3-sn-phosphoglycerides. The polypeptide is Basic phospholipase A2 beta-bungarotoxin A-AL4 chain (Bungarus multicinctus (Many-banded krait)).